A 377-amino-acid chain; its full sequence is uncharacterized protein (377 aa).

The interval 1–46 (MLAGLRRRGSMTTPPGPEIPPPHQGGFYSAGHHPQRPWPETPPPKT) is disordered. Composition is skewed to pro residues over residues 14–23 (PPGPEIPPPH) and 36–45 (RPWPETPPPK). A helical transmembrane segment spans residues 53–73 (MLGAVALLAVVGVTVAVTLAV). The disordered stretch occupies residues 77–107 (DKRDAIPPGSGVSGSPTASDIASADDSGPVS).

The protein resides in the cell inner membrane. Its function is as follows. May be involved in the ESX-1 / type VII specialized secretion system (T7SS), which exports several proteins including EsxA and EsxB. Involved in DNA conjugation in the recipient strain. This is an uncharacterized protein from Mycolicibacterium smegmatis (strain MKD8) (Mycobacterium smegmatis).